We begin with the raw amino-acid sequence, 151 residues long: uncharacterized protein (151 aa).

This is an uncharacterized protein from Mycoplasma genitalium (strain ATCC 33530 / DSM 19775 / NCTC 10195 / G37) (Mycoplasmoides genitalium).